The sequence spans 540 residues: MAKDPGRVLIFDTTLRDGEQSPGASLNLEEKLAIAQQLARLGVDVIEAGFPFASAGDFAAVQRIAQQVGGENGPIICGLARASQRDIKACAEAVSPAPRRRIHTFIATSDIHLEHKLRKSRADVLGIVPEMVSYARSLMDDIEFSCEDAGRSDPEFLYEVIEAAIAAGATTINIPDTVGYTTPSEFGDLIAGINRYVPNIGEAVLSVHGHNDLGLAVANFLEAVKNGARQLECTINGIGERAGNASLEELVMALHVRRRYFNPFFGRDQDSPTPLSAVRTEELTKTSRLVSNLTGMVVQPNKAIVGANAFAHESGIHQDGVLKNRLTYEIIDAKTVGLSDNRISLGKLSGRSAVRARLEELGYDLTREDLDEAFARFKDLADRKREITDRDLEAIVSEQVQQPEARYQLQLVQVSCGTRLKPTATVALSEENGPDQTVSAVGTGPVDAVCRALNQLAGVPNELIEFSVKSVTEGIDAMGEVTIRLRRDGSLYSGHAADTDVVVAAAMAFINALNRLVAAQEHQPLHPQRDAVVLDARPTL.

One can recognise a Pyruvate carboxyltransferase domain in the interval 8–273; it reads VLIFDTTLRD…FFGRDQDSPT (266 aa). Mn(2+) contacts are provided by D17, H208, H210, and N244. Residues 408-540 form a regulatory domain region; the sequence is QLQLVQVSCG…AVVLDARPTL (133 aa).

Belongs to the alpha-IPM synthase/homocitrate synthase family. LeuA type 1 subfamily. As to quaternary structure, homodimer. Requires Mn(2+) as cofactor.

The protein localises to the cytoplasm. The enzyme catalyses 3-methyl-2-oxobutanoate + acetyl-CoA + H2O = (2S)-2-isopropylmalate + CoA + H(+). It participates in amino-acid biosynthesis; L-leucine biosynthesis; L-leucine from 3-methyl-2-oxobutanoate: step 1/4. In terms of biological role, catalyzes the condensation of the acetyl group of acetyl-CoA with 3-methyl-2-oxobutanoate (2-ketoisovalerate) to form 3-carboxy-3-hydroxy-4-methylpentanoate (2-isopropylmalate). The protein is 2-isopropylmalate synthase of Parasynechococcus marenigrum (strain WH8102).